Reading from the N-terminus, the 718-residue chain is Serine/threonine-protein kinase tousled-like 2 (718 aa).

The segment at 24–85 (GVSKGPLNSE…KGTPRGHKIS (62 aa)) is disordered. The segment covering 29–44 (PLNSESSNQSLCSVGS) has biased composition (polar residues). Basic and acidic residues predominate over residues 46 to 61 (SDKEVETPEKKQNDQR). Phosphoserine is present on residues Ser-73, Gln-94, Leu-99, and Ser-102. The disordered stretch occupies residues 147-176 (QQNSPSSTGSGNTEHSCSSQKQISIQHRQT). A required for interaction with TLK1 and DYNLL1/LC8 region spans residues 193–244 (NSDLEKKEGRIDDLLRANCDLRRQIDEQQKMLEKYKERLNRCVTMSKKLLIE). Coiled-coil stretches lie at residues 193–244 (NSDL…LLIE), 285–315 (AFQN…KRKP), and 349–397 (HEQE…DNSQ). Residues 310 to 337 (LAKRKPPAMGQAPPATNEQKQRKSKTNG) are disordered. The Protein kinase domain occupies 408 to 687 (YLLLHLLGRG…VQQLACDPYL (280 aa)). ATP contacts are provided by residues 414-422 (LGRGGFSEV) and Lys-437. The active-site Proton acceptor is Asp-538. Ser-696 carries the post-translational modification Phosphoserine; by CHEK1.

The protein belongs to the protein kinase superfamily. Ser/Thr protein kinase family. Monomer. May form homodimers; homodimerization may enhance autophosphoylation and enzymatic activity. Heterodimer with TLK1. Interacts with YWHAZ; association with 14-3-3 proteins such as YWHAZ regulates subcellular location. May also interact with FEZ1/LZTS1 and FEZ2. Interacts with CHD7 and CHD8. Interacts with DYNLL1/LC8. Mg(2+) serves as cofactor. In terms of processing, phosphorylated at Ser-696, probably by CHEK1. Autophosphorylated; phosphorylation promotes the assembly of higher order oligomers and enzymatic activity. In terms of tissue distribution, ubiquitously expressed in all tissues examined, with high levels in heart and testis, in particular the pachytene spermatocytes and in round spermatids. Some evidence for the existence of a testis-specific isoform suggesting a role in spermatogenesis.

The protein resides in the nucleus. Its subcellular location is the nucleoplasm. The protein localises to the cytoplasm. It localises to the perinuclear region. It is found in the cytoskeleton. It carries out the reaction L-seryl-[protein] + ATP = O-phospho-L-seryl-[protein] + ADP + H(+). It catalyses the reaction L-threonyl-[protein] + ATP = O-phospho-L-threonyl-[protein] + ADP + H(+). Its activity is regulated as follows. Cell cycle-regulated, with maximal activity in the S-phase. Rapidly and transiently inhibited by phosphorylation following the generation of DNA double-stranded breaks during S-phase, probably by CHEK1, possibly at Ser-696. This inhibition is cell cycle checkpoint- and ATM-dependent. Functionally, serine/threonine-protein kinase involved in the process of chromatin assembly and probably also DNA replication, transcription, repair, and chromosome segregation. Phosphorylates the chromatin assembly factors ASF1A and ASF1B. Phosphorylation of ASF1A prevents its proteasome-mediated degradation, thereby enhancing chromatin assembly. Negative regulator of amino acid starvation-induced autophagy. Its function is as follows. Testis-specific isoforms may play a role in spermatogenesis. Highly expressed in embryos throughout development. This chain is Serine/threonine-protein kinase tousled-like 2 (Tlk2), found in Mus musculus (Mouse).